A 542-amino-acid chain; its full sequence is Chaperonin GroEL 3 (542 aa).

ATP contacts are provided by residues 30-33, lysine 51, 87-91, glycine 415, and aspartate 496; these read TLGP and DGTTT.

The protein belongs to the chaperonin (HSP60) family. As to quaternary structure, forms a cylinder of 14 subunits composed of two heptameric rings stacked back-to-back. Interacts with the co-chaperonin GroES.

Its subcellular location is the cytoplasm. The catalysed reaction is ATP + H2O + a folded polypeptide = ADP + phosphate + an unfolded polypeptide.. Its function is as follows. Together with its co-chaperonin GroES, plays an essential role in assisting protein folding. The GroEL-GroES system forms a nano-cage that allows encapsulation of the non-native substrate proteins and provides a physical environment optimized to promote and accelerate protein folding. The polypeptide is Chaperonin GroEL 3 (Sinorhizobium medicae (strain WSM419) (Ensifer medicae)).